The chain runs to 45 residues: Mu-conotoxin-like Cal 12.1.2a (45 aa).

Disulfide bonds link Cys3–Cys16, Cys11–Cys28, Cys18–Cys33, and Cys27–Cys39. Pro23 is modified (4-hydroxyproline). 6'-bromotryptophan is present on residues Trp37 and Trp38. Pro40 is modified (4-hydroxyproline). Trp44 carries the 6'-bromotryptophan modification.

As to expression, expressed by the venom duct.

It is found in the secreted. Functionally, mu-conotoxins block voltage-gated sodium channels. This toxin reversibly blocks voltage-gated sodium channel in cephalopods, with no alteration in the voltage dependence of sodium conductance or on the kinetics of inactivation. This Californiconus californicus (California cone) protein is Mu-conotoxin-like Cal 12.1.2a.